An 813-amino-acid polypeptide reads, in one-letter code: MIFSKLGSSLARSSRSKGFVYGGGVRSAVFNQGRLRAPQNLEAAVNQVDGGLGFLRRHFASFAARKGLEAGDLSRAFANPRLRRFFSSQTPKKKNYENYYPKDSKKAPKNEQKSESRDGSKKNENENAGDAFSNEYQNMLIPLMAIALILSTFSLGSREQQQISFQEFKNKLLEAGLVDHIDVSNKEVAKVYVRSSPKSQTTEEVVQGPGNGVPAKGRGGQYKYYFNIGSVESFEEKLEEAQEAIGVNSHDFVPVTYVSETIWYQELLRFAPTLLLVATLIFGARRMQGGLGGLGGPGGKAGRGIFNIGKAQITRADKNSKNKIYFKDVAGCEEAKQEIMEFVHFLQNPKKYEDLGAKIPKGALLVGPPGTGKTLLAKATAGESAVPFLSISGSDFMEMFVGVGPSRVRNLFQEARQCAPSIIFIDEIDAIGRARGRGGFSGGNDERESTLNQLLVEMDGFGTTAGVVVLAGTNRPDILDKALLRPGRFDRQITIDKPDIKGRDQIFQIYLKKIKLDHEPSYYSQRLAALTPGFAGADIANVCNEAALIAARHEGATVTMAHFDSAIDRVIGGLEKKNRVISKLERRTVAYHESGHAVAGWFLEHAEPLLKVTIVPRGTAALGFAQYVPNENLLMTKEQLFDMTCMTLGGRAAEQVLIGRISTGAQNDLEKVTKMTYAQVAVYGFSDKIGLLSFPQREDEFSKPYSNRTGAMIDEEVREWVGKAYKRTVELIEEHKEQVAQIAELLLEKEVLHQDDLTKVLGERPFKSGETTNYDRFKSGFEESEKESQKESVPVKPVEDDGIPPLEPQVVPT.

The N-terminal 86 residues, 1 to 86, are a transit peptide targeting the mitochondrion; sequence MIFSKLGSSL…FANPRLRRFF (86 aa). Residues 93 to 129 are disordered; it reads KKNYENYYPKDSKKAPKNEQKSESRDGSKKNENENAG. Residues 94–125 are compositionally biased toward basic and acidic residues; the sequence is KNYENYYPKDSKKAPKNEQKSESRDGSKKNEN. Residues 139–157 form a helical membrane-spanning segment; that stretch reads MLIPLMAIALILSTFSLGS. 367–374 is a binding site for ATP; sequence GPPGTGKT. A Zn(2+)-binding site is contributed by histidine 592. The active site involves glutamate 593. Residues histidine 596 and aspartate 668 each coordinate Zn(2+). A compositionally biased stretch (basic and acidic residues) spans 764–790; sequence RPFKSGETTNYDRFKSGFEESEKESQK. Residues 764–813 form a disordered region; that stretch reads RPFKSGETTNYDRFKSGFEESEKESQKESVPVKPVEDDGIPPLEPQVVPT.

The protein in the N-terminal section; belongs to the AAA ATPase family. It in the C-terminal section; belongs to the peptidase M41 family. Zn(2+) serves as cofactor.

It localises to the mitochondrion inner membrane. Its function is as follows. Probable ATP-dependent zinc metallopeptidase. Involved in the assembly and/or stability of the complexes I and V of the mitochondrial oxidative phosphorylation system. The protein is ATP-dependent zinc metalloprotease FTSH 10, mitochondrial (FTSH10) of Arabidopsis thaliana (Mouse-ear cress).